A 43-amino-acid chain; its full sequence is Protein PsbN (43 aa).

A helical membrane pass occupies residues 5–27 (ALVAISISRLLVSFTGYALYTAF).

It belongs to the PsbN family.

The protein localises to the plastid. It localises to the chloroplast thylakoid membrane. May play a role in photosystem I and II biogenesis. This is Protein PsbN from Bowenia serrulata (Byfield fern).